We begin with the raw amino-acid sequence, 96 residues long: Large ribosomal subunit protein bL28 (96 aa).

Residues Met-1–Asn-23 are disordered.

This sequence belongs to the bacterial ribosomal protein bL28 family.

In Cereibacter sphaeroides (strain ATCC 17025 / ATH 2.4.3) (Rhodobacter sphaeroides), this protein is Large ribosomal subunit protein bL28.